We begin with the raw amino-acid sequence, 1038 residues long: Eukaryotic translation initiation factor 3 subunit A (1038 aa).

Residues 92–121 (LKKFIELAEKKVTEAQAKADEIQSSLESAA) are a coiled coil. Residues 339-523 (MTKAVSFVLL…GVLTFDTDVF (185 aa)) form the PCI domain. Residues 611-899 (IDKKKEAATD…QKQREEEAEA (289 aa)) are a coiled coil. Basic and acidic residues-rich tracts occupy residues 621-632 (ALQRKQREEETR) and 800-901 (RHEE…EARR). Disordered regions lie at residues 621-641 (ALQRKQREEETRKRIRTQQLQ) and 800-1038 (RHEE…QQGQ). Composition is skewed to low complexity over residues 943 to 952 (KEAAGGAAPE) and 976 to 993 (GASAAAPAAPPSNGAAPS). The segment covering 1002-1019 (DSGSSTPPSRTQTPATTS) has biased composition (polar residues).

Belongs to the eIF-3 subunit A family. In terms of assembly, component of the eukaryotic translation initiation factor 3 (eIF-3) complex.

Its subcellular location is the cytoplasm. Functionally, RNA-binding component of the eukaryotic translation initiation factor 3 (eIF-3) complex, which is involved in protein synthesis of a specialized repertoire of mRNAs and, together with other initiation factors, stimulates binding of mRNA and methionyl-tRNAi to the 40S ribosome. The eIF-3 complex specifically targets and initiates translation of a subset of mRNAs involved in cell proliferation. This Aspergillus oryzae (strain ATCC 42149 / RIB 40) (Yellow koji mold) protein is Eukaryotic translation initiation factor 3 subunit A (tif32).